Reading from the N-terminus, the 145-residue chain is 3-hydroxyacyl-[acyl-carrier-protein] dehydratase FabZ (145 aa).

Residue His47 is part of the active site.

This sequence belongs to the thioester dehydratase family. FabZ subfamily.

It localises to the cytoplasm. The catalysed reaction is a (3R)-hydroxyacyl-[ACP] = a (2E)-enoyl-[ACP] + H2O. In terms of biological role, involved in unsaturated fatty acids biosynthesis. Catalyzes the dehydration of short chain beta-hydroxyacyl-ACPs and long chain saturated and unsaturated beta-hydroxyacyl-ACPs. In Methylobacillus flagellatus (strain ATCC 51484 / DSM 6875 / VKM B-1610 / KT), this protein is 3-hydroxyacyl-[acyl-carrier-protein] dehydratase FabZ.